Consider the following 601-residue polypeptide: uncharacterized protein (601 aa).

The segment at 127-364 (SSLFSSGSPP…PAFANDDTVH (238 aa)) is disordered. Residues 128 to 137 (SLFSSGSPPD) are compositionally biased toward polar residues. Over residues 141 to 154 (RNSTSNLSSVSTNS) the composition is skewed to low complexity. Composition is skewed to polar residues over residues 159–177 (TIGS…ASQR), 199–213 (ALSS…NVTP), and 232–250 (SATN…SPSQ). 2 positions are modified to phosphoserine: serine 247 and serine 281. The span at 265–281 (SLSSSPSSEDSDLSLSS) shows a compositional bias: low complexity. Basic and acidic residues-rich tracts occupy residues 286-296 (DEKKQPSKSEK) and 313-325 (GSKE…KEKA). Residue serine 335 is modified to Phosphoserine. Polar residues predominate over residues 338–356 (DTSTEYDSNSLRRSRSNPA).

This is an uncharacterized protein from Schizosaccharomyces pombe (strain 972 / ATCC 24843) (Fission yeast).